The following is a 115-amino-acid chain: MARVKSGKTNRARHKKVLKRAKGYYSAGSRAYIHAVEKNDRGMAFAYRDRKVNKRNFRTLWNQRINAAARLNGTTYSRLIGGLIKAGIQVDRKILADLAINDAAAFTALCKHALA.

This sequence belongs to the bacterial ribosomal protein bL20 family.

Functionally, binds directly to 23S ribosomal RNA and is necessary for the in vitro assembly process of the 50S ribosomal subunit. It is not involved in the protein synthesizing functions of that subunit. This chain is Large ribosomal subunit protein bL20, found in Bdellovibrio bacteriovorus (strain ATCC 15356 / DSM 50701 / NCIMB 9529 / HD100).